The primary structure comprises 101 residues: Urease subunit beta (101 aa).

The protein belongs to the urease beta subunit family. As to quaternary structure, heterotrimer of UreA (gamma), UreB (beta) and UreC (alpha) subunits. Three heterotrimers associate to form the active enzyme.

The protein resides in the cytoplasm. The enzyme catalyses urea + 2 H2O + H(+) = hydrogencarbonate + 2 NH4(+). Its pathway is nitrogen metabolism; urea degradation; CO(2) and NH(3) from urea (urease route): step 1/1. The polypeptide is Urease subunit beta (Cupriavidus necator (strain ATCC 17699 / DSM 428 / KCTC 22496 / NCIMB 10442 / H16 / Stanier 337) (Ralstonia eutropha)).